We begin with the raw amino-acid sequence, 645 residues long: UvrABC system protein C (645 aa).

Positions 12–91 (TGPGVYLYKN…IKQRKPRFNV (80 aa)) constitute a GIY-YIG domain. Residues 202–237 (ADLERSLEVRMQEAAAAEQFELAAKYRDLLVTLHQL) enclose the UVR domain.

Belongs to the UvrC family. In terms of assembly, interacts with UvrB in an incision complex.

The protein localises to the cytoplasm. Its function is as follows. The UvrABC repair system catalyzes the recognition and processing of DNA lesions. UvrC both incises the 5' and 3' sides of the lesion. The N-terminal half is responsible for the 3' incision and the C-terminal half is responsible for the 5' incision. This chain is UvrABC system protein C, found in Acidobacterium capsulatum (strain ATCC 51196 / DSM 11244 / BCRC 80197 / JCM 7670 / NBRC 15755 / NCIMB 13165 / 161).